The sequence spans 149 residues: Large ribosomal subunit protein bL9 (149 aa).

Belongs to the bacterial ribosomal protein bL9 family.

Binds to the 23S rRNA. The sequence is that of Large ribosomal subunit protein bL9 from Syntrophus aciditrophicus (strain SB).